We begin with the raw amino-acid sequence, 162 residues long: Photosystem II extrinsic protein V (162 aa).

Residues 1 to 26 (MLKRYMLLAVATVFFAFQVLTSTATA) form the signal peptide. Heme c-binding residues include Cys62, Cys65, His66, and His117.

The protein belongs to the cytochrome c family. PsbV subfamily. As to quaternary structure, PSII is composed of 1 copy each of membrane proteins PsbA, PsbB, PsbC, PsbD, PsbE, PsbF, PsbH, PsbI, PsbJ, PsbK, PsbL, PsbM, PsbT, PsbX, PsbY, PsbZ, Psb30/Ycf12, peripheral proteins PsbO, CyanoQ (PsbQ), PsbU, PsbV and a large number of cofactors. It forms dimeric complexes. Requires heme c as cofactor.

It localises to the cellular thylakoid membrane. Functionally, one of the extrinsic, lumenal subunits of photosystem II (PSII). PSII is a light-driven water plastoquinone oxidoreductase, using light energy to abstract electrons from H(2)O, generating a proton gradient subsequently used for ATP formation. The extrinsic proteins stabilize the structure of photosystem II oxygen-evolving complex (OEC), the ion environment of oxygen evolution and protect the OEC against heat-induced inactivation. Low-potential cytochrome c that plays a role in the OEC of PSII. The chain is Photosystem II extrinsic protein V from Acaryochloris marina (strain MBIC 11017).